A 384-amino-acid polypeptide reads, in one-letter code: Bifunctional enzyme IspD/IspF (384 aa).

The segment at 1–226 is 2-C-methyl-D-erythritol 4-phosphate cytidylyltransferase; it reads MAKTVVLVVA…RCLFDGPGEV (226 aa). A 2-C-methyl-D-erythritol 2,4-cyclodiphosphate synthase region spans residues 227-384; sequence RSASGYDVHR…QAMASVWLPR (158 aa). 2 residues coordinate a divalent metal cation: D233 and H235. 4-CDP-2-C-methyl-D-erythritol 2-phosphate-binding positions include 233-235 and 260-261; these read DVH and HS. H268 serves as a coordination point for a divalent metal cation. 4-CDP-2-C-methyl-D-erythritol 2-phosphate-binding positions include 282–284, 358–361, F365, and R368; these read DIG and TTTE.

The protein in the N-terminal section; belongs to the IspD/TarI cytidylyltransferase family. IspD subfamily. In the C-terminal section; belongs to the IspF family. The cofactor is a divalent metal cation.

The enzyme catalyses 2-C-methyl-D-erythritol 4-phosphate + CTP + H(+) = 4-CDP-2-C-methyl-D-erythritol + diphosphate. It carries out the reaction 4-CDP-2-C-methyl-D-erythritol 2-phosphate = 2-C-methyl-D-erythritol 2,4-cyclic diphosphate + CMP. The protein operates within isoprenoid biosynthesis; isopentenyl diphosphate biosynthesis via DXP pathway; isopentenyl diphosphate from 1-deoxy-D-xylulose 5-phosphate: step 2/6. It participates in isoprenoid biosynthesis; isopentenyl diphosphate biosynthesis via DXP pathway; isopentenyl diphosphate from 1-deoxy-D-xylulose 5-phosphate: step 4/6. Bifunctional enzyme that catalyzes the formation of 4-diphosphocytidyl-2-C-methyl-D-erythritol from CTP and 2-C-methyl-D-erythritol 4-phosphate (MEP) (IspD), and catalyzes the conversion of 4-diphosphocytidyl-2-C-methyl-D-erythritol 2-phosphate (CDP-ME2P) to 2-C-methyl-D-erythritol 2,4-cyclodiphosphate (ME-CPP) with a corresponding release of cytidine 5-monophosphate (CMP) (IspF). This Paramagnetospirillum magneticum (strain ATCC 700264 / AMB-1) (Magnetospirillum magneticum) protein is Bifunctional enzyme IspD/IspF.